A 77-amino-acid polypeptide reads, in one-letter code: Conotoxin Ar5.1 b (77 aa).

The N-terminal stretch at 1 to 19 (MLCLPVFIILLLLASPAAS) is a signal peptide. Positions 20-44 (NPLKTRIQSDLIRAALEDADMKNEK) are excised as a propeptide.

The protein belongs to the conotoxin T superfamily. In terms of processing, contains 2 disulfide bonds that can be either 'C1-C3, C2-C4' or 'C1-C4, C2-C3', since these disulfide connectivities have been observed for conotoxins with cysteine framework V (for examples, see AC P0DQQ7 and AC P81755). As to expression, expressed by the venom duct.

It localises to the secreted. The sequence is that of Conotoxin Ar5.1 b from Conus arenatus (Sand-dusted cone).